The following is a 300-amino-acid chain: NAD kinase (300 aa).

Asp-75 acts as the Proton acceptor in catalysis. NAD(+) contacts are provided by residues 75 to 76, 149 to 150, Arg-177, Asp-179, 190 to 195, Ala-214, and Gln-248; these read DG, ND, and TAYALS.

It belongs to the NAD kinase family. Requires a divalent metal cation as cofactor.

It is found in the cytoplasm. It carries out the reaction NAD(+) + ATP = ADP + NADP(+) + H(+). In terms of biological role, involved in the regulation of the intracellular balance of NAD and NADP, and is a key enzyme in the biosynthesis of NADP. Catalyzes specifically the phosphorylation on 2'-hydroxyl of the adenosine moiety of NAD to yield NADP. The protein is NAD kinase of Burkholderia pseudomallei (strain K96243).